Reading from the N-terminus, the 144-residue chain is Sec-independent protein translocase protein TatB (144 aa).

A helical membrane pass occupies residues 1–21 (MFEIGFWELVLVAIIGIVVVG). Residues 97–144 (KMIDEPPYQEPPPAAHSVQTDAEAYRDTGIEPADKSSSPEHHHDDAAR) form a disordered region. Basic and acidic residues predominate over residues 119–144 (EAYRDTGIEPADKSSSPEHHHDDAAR).

It belongs to the TatB family. In terms of assembly, the Tat system comprises two distinct complexes: a TatABC complex, containing multiple copies of TatA, TatB and TatC subunits, and a separate TatA complex, containing only TatA subunits. Substrates initially bind to the TatABC complex, which probably triggers association of the separate TatA complex to form the active translocon.

The protein localises to the cell inner membrane. In terms of biological role, part of the twin-arginine translocation (Tat) system that transports large folded proteins containing a characteristic twin-arginine motif in their signal peptide across membranes. Together with TatC, TatB is part of a receptor directly interacting with Tat signal peptides. TatB may form an oligomeric binding site that transiently accommodates folded Tat precursor proteins before their translocation. This chain is Sec-independent protein translocase protein TatB, found in Dichelobacter nodosus (strain VCS1703A).